Reading from the N-terminus, the 30-residue chain is Bowman-Birk type proteinase inhibitor 3 (30 aa).

2 cysteine pairs are disulfide-bonded: Cys9–Cys24 and Cys14–Cys22.

In terms of biological role, inhibits trypsin (IC(50)=4.90 nM) and, to a lesser extent, alpha-chymotrypsin (IC(50)=1.87 uM). The sequence is that of Bowman-Birk type proteinase inhibitor 3 from Lathyrus sativus (White vetchling).